A 373-amino-acid polypeptide reads, in one-letter code: Cyclin-A3-1 (373 aa).

The tract at residues 50 to 80 (AVVLKPQPAPRGGKRAASHAAEPKKPAPPPA) is disordered.

This sequence belongs to the cyclin family. Cyclin AB subfamily.

This is Cyclin-A3-1 (CYCA3-1) from Oryza sativa subsp. japonica (Rice).